The chain runs to 333 residues: 4-hydroxy-3-methylbut-2-enyl diphosphate reductase (333 aa).

Residue cysteine 20 participates in [4Fe-4S] cluster binding. Residues histidine 49 and histidine 85 each contribute to the (2E)-4-hydroxy-3-methylbut-2-enyl diphosphate site. Dimethylallyl diphosphate is bound by residues histidine 49 and histidine 85. The isopentenyl diphosphate site is built by histidine 49 and histidine 85. Cysteine 107 serves as a coordination point for [4Fe-4S] cluster. (2E)-4-hydroxy-3-methylbut-2-enyl diphosphate is bound at residue histidine 135. Position 135 (histidine 135) interacts with dimethylallyl diphosphate. Position 135 (histidine 135) interacts with isopentenyl diphosphate. Glutamate 137 (proton donor) is an active-site residue. Threonine 176 serves as a coordination point for (2E)-4-hydroxy-3-methylbut-2-enyl diphosphate. Position 206 (cysteine 206) interacts with [4Fe-4S] cluster. Positions 234, 235, 236, and 279 each coordinate (2E)-4-hydroxy-3-methylbut-2-enyl diphosphate. Serine 234, serine 235, asparagine 236, and serine 279 together coordinate dimethylallyl diphosphate. 4 residues coordinate isopentenyl diphosphate: serine 234, serine 235, asparagine 236, and serine 279.

It belongs to the IspH family. The cofactor is [4Fe-4S] cluster.

It carries out the reaction isopentenyl diphosphate + 2 oxidized [2Fe-2S]-[ferredoxin] + H2O = (2E)-4-hydroxy-3-methylbut-2-enyl diphosphate + 2 reduced [2Fe-2S]-[ferredoxin] + 2 H(+). It catalyses the reaction dimethylallyl diphosphate + 2 oxidized [2Fe-2S]-[ferredoxin] + H2O = (2E)-4-hydroxy-3-methylbut-2-enyl diphosphate + 2 reduced [2Fe-2S]-[ferredoxin] + 2 H(+). The protein operates within isoprenoid biosynthesis; dimethylallyl diphosphate biosynthesis; dimethylallyl diphosphate from (2E)-4-hydroxy-3-methylbutenyl diphosphate: step 1/1. It participates in isoprenoid biosynthesis; isopentenyl diphosphate biosynthesis via DXP pathway; isopentenyl diphosphate from 1-deoxy-D-xylulose 5-phosphate: step 6/6. Functionally, catalyzes the conversion of 1-hydroxy-2-methyl-2-(E)-butenyl 4-diphosphate (HMBPP) into a mixture of isopentenyl diphosphate (IPP) and dimethylallyl diphosphate (DMAPP). Acts in the terminal step of the DOXP/MEP pathway for isoprenoid precursor biosynthesis. This chain is 4-hydroxy-3-methylbut-2-enyl diphosphate reductase, found in Rhizobium johnstonii (strain DSM 114642 / LMG 32736 / 3841) (Rhizobium leguminosarum bv. viciae).